Here is a 323-residue protein sequence, read N- to C-terminus: MAIDIFNPQVSVVAKGLEGKVITIYGSNNLGKTKQSTRMKKPLYLPFEKGLNAIAGVQFMPINSWADFKKVNKQLTKNAEKAKEMYQTIIVDEVDAFAKYATRYVCEQYDVERIKDGNDGFGLWKEYETEVWEEINKLIGVGFTVIFIAHAAEDKKGKVYPKGDKRVLAPVIDNSDIVLYLSSNGVDEDRKVIKSSAWLAETEEHFARSRFDYIDTYLPEFTAENLEKAIIEAVERQEQAEGIVAVTYEEQKQNNASEELDFNSLMDQIKEIGMKLNEEGRLEEVNEITEKHLGKGVKVTECSRKQVGVMSVILDDLKDLLAE.

Residues 222 to 272 adopt a coiled-coil conformation; that stretch reads TAENLEKAIIEAVERQEQAEGIVAVTYEEQKQNNASEELDFNSLMDQIKEI.

This chain is SPbeta prophage-derived uncharacterized protein YorG (yorG), found in Bacillus subtilis (strain 168).